Here is a 584-residue protein sequence, read N- to C-terminus: uncharacterized protein (584 aa).

Positions 353 to 375 are enriched in polar residues; sequence NSEGQTNAETSLNGKGTVGNQWA. Disordered regions lie at residues 353–379, 400–426, and 463–565; these read NSEGQTNAETSLNGKGTVGNQWASPPE, LESKFNGTGGGQTDSEKEQIMESVSSH, and SVDS…CNSG. Residues 502-511 are compositionally biased toward polar residues; the sequence is KANSPASSRL. Residues 516–535 show a composition bias toward basic and acidic residues; sequence DSSHLSKHVNFDKNPDHSEA.

This is an uncharacterized protein from Mus musculus (Mouse).